Consider the following 272-residue polypeptide: MNNRVHQGHFARKRFGQNFLNDQFVIDSIVSAIHPVPGEAVVEIGPGLGALTEPVAARMDHMTVIELDRDLADRLASHPQLKDKLTIHQEDAMKINFSELAELAGQPLRVFGNLPYNISTPLMFHLFSYTSAIRDMHFMLQKEVVNRLVAGPNSKAYGRLTVMAQYYCNVIPVLEVPPTAFTPAPKVDSAVVRLIPHVNTPNPVGDVRMLSRITTQAFNQRRKTVRNSLGDLFTPEQLIELGIDPILRAENISVAQYCKLANWLSAQSTPQE.

Positions 18, 20, 45, 66, 91, and 113 each coordinate S-adenosyl-L-methionine.

The protein belongs to the class I-like SAM-binding methyltransferase superfamily. rRNA adenine N(6)-methyltransferase family. RsmA subfamily.

It localises to the cytoplasm. It carries out the reaction adenosine(1518)/adenosine(1519) in 16S rRNA + 4 S-adenosyl-L-methionine = N(6)-dimethyladenosine(1518)/N(6)-dimethyladenosine(1519) in 16S rRNA + 4 S-adenosyl-L-homocysteine + 4 H(+). Specifically dimethylates two adjacent adenosines (A1518 and A1519) in the loop of a conserved hairpin near the 3'-end of 16S rRNA in the 30S particle. May play a critical role in biogenesis of 30S subunits. The sequence is that of Ribosomal RNA small subunit methyltransferase A from Yersinia enterocolitica serotype O:8 / biotype 1B (strain NCTC 13174 / 8081).